The following is a 183-amino-acid chain: ATP-dependent protease subunit HslV (183 aa).

The active site involves Thr-2. Gly-157, Cys-160, and Thr-163 together coordinate Na(+).

The protein belongs to the peptidase T1B family. HslV subfamily. As to quaternary structure, a double ring-shaped homohexamer of HslV is capped on each side by a ring-shaped HslU homohexamer. The assembly of the HslU/HslV complex is dependent on binding of ATP.

It is found in the cytoplasm. It catalyses the reaction ATP-dependent cleavage of peptide bonds with broad specificity.. Its activity is regulated as follows. Allosterically activated by HslU binding. Its function is as follows. Protease subunit of a proteasome-like degradation complex believed to be a general protein degrading machinery. This Vibrio campbellii (strain ATCC BAA-1116) protein is ATP-dependent protease subunit HslV.